A 405-amino-acid polypeptide reads, in one-letter code: L-rhamnonate dehydratase (405 aa).

Substrate-binding residues include histidine 33 and arginine 59. Mg(2+)-binding residues include aspartate 226, glutamate 252, and glutamate 280. The active-site Proton acceptor is the histidine 329. Glutamate 349 provides a ligand contact to substrate.

It belongs to the mandelate racemase/muconate lactonizing enzyme family. RhamD subfamily. Homooctamer; tetramer of dimers. Mg(2+) is required as a cofactor.

It catalyses the reaction L-rhamnonate = 2-dehydro-3-deoxy-L-rhamnonate + H2O. Catalyzes the dehydration of L-rhamnonate to 2-keto-3-deoxy-L-rhamnonate (KDR). The protein is L-rhamnonate dehydratase of Escherichia coli (strain SMS-3-5 / SECEC).